The primary structure comprises 292 residues: Acetylglutamate kinase (292 aa).

Substrate-binding positions include 64 to 65 (GG), Arg86, and Asn190.

The protein belongs to the acetylglutamate kinase family. ArgB subfamily.

It localises to the cytoplasm. The enzyme catalyses N-acetyl-L-glutamate + ATP = N-acetyl-L-glutamyl 5-phosphate + ADP. The protein operates within amino-acid biosynthesis; L-arginine biosynthesis; N(2)-acetyl-L-ornithine from L-glutamate: step 2/4. Its function is as follows. Catalyzes the ATP-dependent phosphorylation of N-acetyl-L-glutamate. The protein is Acetylglutamate kinase of Trichlorobacter lovleyi (strain ATCC BAA-1151 / DSM 17278 / SZ) (Geobacter lovleyi).